The chain runs to 262 residues: Bacteriorhodopsin (262 aa).

The propeptide occupies 1–13 (MLELLPTAVEGVS). Position 14 is a pyrrolidone carboxylic acid (glutamine 14). Over 14–22 (QAQITGRPE) the chain is Extracellular. A helical transmembrane segment spans residues 23–42 (WIWLALGTALMGLGTLYFLV). Residues 43–56 (KGMGVSDPDAKKFY) lie on the Cytoplasmic side of the membrane. The helical transmembrane segment at 57-75 (AITTLVPAIAFTMYLSMLL) threads the bilayer. The Extracellular segment spans residues 76–92 (GYGLTMVPFGGEQNPIY). The chain crosses the membrane as a helical span at residues 93–109 (WARYADWLFTTPLLLLD). Residues 110-120 (LALLVDADQGT) are Cytoplasmic-facing. The chain crosses the membrane as a helical span at residues 121-140 (ILALVGADGIMIGTGLVGAL). Residues 141–147 (TKVYSYR) are Extracellular-facing. The helical transmembrane segment at 148–167 (FVWWAISTAAMLYILYVLFF) threads the bilayer. Over 168–185 (GFTSKAESMRPEVASTFK) the chain is Cytoplasmic. A helical transmembrane segment spans residues 186–204 (VLRNVTVVLWSAYPVVWLI). Residues 205 to 216 (GSEGAGIVPLNI) lie on the Extracellular side of the membrane. The helical transmembrane segment at 217–236 (ETLLFMVLDVSAKVGFGLIL) threads the bilayer. Lysine 229 bears the N6-(retinylidene)lysine mark. The Cytoplasmic portion of the chain corresponds to 237–262 (LRSRAIFGEAEAPEPSAGDGAAATSD).

As to quaternary structure, homotrimer. Post-translationally, the covalent binding of retinal to the apoprotein, bacterioopsin, generates bacteriorhodopsin.

The protein localises to the cell membrane. Light-driven proton pump. This is Bacteriorhodopsin (bop) from Halobacterium salinarum (strain ATCC 700922 / JCM 11081 / NRC-1) (Halobacterium halobium).